Reading from the N-terminus, the 137-residue chain is Small ribosomal subunit protein uS9c (137 aa).

Residues 106–137 (KSEGYLTRDPRVKERKKYGLKKARKAPQFSKR) form a disordered region. Residues 118 to 137 (KERKKYGLKKARKAPQFSKR) show a composition bias toward basic residues.

Belongs to the universal ribosomal protein uS9 family.

The protein resides in the plastid. The protein localises to the chloroplast. The polypeptide is Small ribosomal subunit protein uS9c (rps9) (Pyropia yezoensis (Susabi-nori)).